Consider the following 512-residue polypeptide: Probable DNA ligase (512 aa).

An ATP-binding site is contributed by E208. Catalysis depends on K210, which acts as the N6-AMP-lysine intermediate. ATP is bound by residues R215, R230, E259, F299, R374, and K380.

Belongs to the ATP-dependent DNA ligase family. The cofactor is Mg(2+).

The enzyme catalyses ATP + (deoxyribonucleotide)n-3'-hydroxyl + 5'-phospho-(deoxyribonucleotide)m = (deoxyribonucleotide)n+m + AMP + diphosphate.. In terms of biological role, DNA ligase that seals nicks in double-stranded DNA during DNA replication, DNA recombination and DNA repair. The sequence is that of Probable DNA ligase from Streptomyces coelicolor (strain ATCC BAA-471 / A3(2) / M145).